The sequence spans 447 residues: UPF0210 protein LEUM_1180 (447 aa).

It belongs to the UPF0210 family. In terms of assembly, homodimer.

The chain is UPF0210 protein LEUM_1180 from Leuconostoc mesenteroides subsp. mesenteroides (strain ATCC 8293 / DSM 20343 / BCRC 11652 / CCM 1803 / JCM 6124 / NCDO 523 / NBRC 100496 / NCIMB 8023 / NCTC 12954 / NRRL B-1118 / 37Y).